The primary structure comprises 338 residues: Phenylalanine--tRNA ligase alpha subunit (338 aa).

Mg(2+) is bound at residue E253.

It belongs to the class-II aminoacyl-tRNA synthetase family. Phe-tRNA synthetase alpha subunit type 1 subfamily. Tetramer of two alpha and two beta subunits. Mg(2+) serves as cofactor.

The protein resides in the cytoplasm. The catalysed reaction is tRNA(Phe) + L-phenylalanine + ATP = L-phenylalanyl-tRNA(Phe) + AMP + diphosphate + H(+). This Syntrophus aciditrophicus (strain SB) protein is Phenylalanine--tRNA ligase alpha subunit.